A 310-amino-acid polypeptide reads, in one-letter code: Zinc finger protein-like 1 (310 aa).

A B box-type; degenerate zinc finger spans residues M1 to W43. Residues M1–G266 are Cytoplasmic-facing. An RING-type; degenerate zinc finger spans residues C53–N101. The interval P145–D231 is disordered. A compositionally biased stretch (polar residues) spans L148–P165. Over residues K213–P224 the composition is skewed to basic and acidic residues. The chain crosses the membrane as a helical span at residues L267–G287. The Lumenal segment spans residues R288–S310.

Belongs to the ZFPL1 family. As to quaternary structure, interacts with GOLGA2/GM130. In terms of processing, phosphorylated. In terms of tissue distribution, expressed strongly in the exocrine pancreas.

Its subcellular location is the golgi apparatus. It is found in the cis-Golgi network membrane. Functionally, required for cis-Golgi integrity and efficient ER to Golgi transport. Involved in the maintenance of the integrity of the cis-Golgi, possibly via its interaction with GOLGA2/GM130. This chain is Zinc finger protein-like 1 (ZFPL1), found in Homo sapiens (Human).